The chain runs to 428 residues: 3-phosphoshikimate 1-carboxyvinyltransferase (428 aa).

Residues K22, S23, and R27 each contribute to the 3-phosphoshikimate site. A phosphoenolpyruvate-binding site is contributed by K22. Residues G96 and R124 each contribute to the phosphoenolpyruvate site. Residues S170, S171, Q172, S198, D314, N337, and K341 each contribute to the 3-phosphoshikimate site. Phosphoenolpyruvate is bound at residue Q172. The active-site Proton acceptor is D314. R345, R387, and K412 together coordinate phosphoenolpyruvate.

Belongs to the EPSP synthase family. In terms of assembly, monomer.

Its subcellular location is the cytoplasm. It carries out the reaction 3-phosphoshikimate + phosphoenolpyruvate = 5-O-(1-carboxyvinyl)-3-phosphoshikimate + phosphate. Its pathway is metabolic intermediate biosynthesis; chorismate biosynthesis; chorismate from D-erythrose 4-phosphate and phosphoenolpyruvate: step 6/7. In terms of biological role, catalyzes the transfer of the enolpyruvyl moiety of phosphoenolpyruvate (PEP) to the 5-hydroxyl of shikimate-3-phosphate (S3P) to produce enolpyruvyl shikimate-3-phosphate and inorganic phosphate. This is 3-phosphoshikimate 1-carboxyvinyltransferase from Vibrio vulnificus (strain YJ016).